The following is a 315-amino-acid chain: MVIIYIFLFLSSAIIDSTGLAKAQKLDAIGGKGGKQWDDGADHDNVAKVYIRGGLEGIQYIKFDYVKDGKTIDASIHGVSGSGFTQTFEIDYQNSEYIVSVDGYYDKSGTMQALEFKTNLKTSEVIGYPKGTTKFSLGGVNGKMVIGFHGSAGKVLNSIGAYLTTAPPTKSQLVGGLTGGEPWDDGSNYDGVKKISVTYISTLIRSINVDYEKDGQVVTRYHGMKNGDTEEFVIDYPNEYLISVEGTYNILPDDNVLVIRSLIFKTSKGRISPTYGFVSGTKFVLESQGNAIVGFYGRDGGAFDAIGVYFSPIPS.

Positions methionine 1 to alanine 23 are cleaved as a signal peptide. 2 Jacalin-type lectin domains span residues glutamine 24–threonine 165 and proline 168–proline 312.

Belongs to the jacalin lectin family.

The chain is Jacalin-related lectin 10 (JAL10) from Arabidopsis thaliana (Mouse-ear cress).